Reading from the N-terminus, the 339-residue chain is Fructose-1,6-bisphosphatase isozyme 2 (339 aa).

Residues 3–10 (DRSPFETD) are important for interaction with ALDOA. AMP is bound by residues V18 and 28–32 (TGELT). Mg(2+) is bound by residues D69 and E98. 113–114 (KY) provides a ligand contact to AMP. Mg(2+) contacts are provided by D119, L121, and D122. D122 provides a ligand contact to substrate. AMP is bound at residue R141. The Nuclear localization signal signature appears at 204–208 (KKKGK). 213 to 216 (NEGY) provides a ligand contact to substrate. Residues Y216 and Y219 each carry the phosphotyrosine modification. Substrate contacts are provided by residues 245–249 (YVGSM), Y265, and K275. E281 is a Mg(2+) binding site.

The protein belongs to the FBPase class 1 family. In terms of assembly, homotetramer. Interacts with ALDOA; the interaction blocks inhibition by physiological concentrations of AMP and reduces inhibition by Ca(2+). Interacts with alpha-actinin and F-actin. It depends on Mg(2+) as a cofactor.

Its subcellular location is the cell junction. It localises to the cytoplasm. The protein localises to the nucleus. It is found in the myofibril. The protein resides in the sarcomere. Its subcellular location is the z line. It carries out the reaction beta-D-fructose 1,6-bisphosphate + H2O = beta-D-fructose 6-phosphate + phosphate. It functions in the pathway carbohydrate biosynthesis; gluconeogenesis. Its activity is regulated as follows. Subject to complex allosteric regulation. The enzyme can assume an active R-state, or an inactive T-state. Intermediate conformations may exist. AMP acts as an allosteric inhibitor. Fructose 2,6-bisphosphate acts as a competitive inhibitor. Strongly inhibited by Ca(2+). Functionally, catalyzes the hydrolysis of fructose 1,6-bisphosphate to fructose 6-phosphate in the presence of divalent cations and probably participates in glycogen synthesis from carbohydrate precursors, such as lactate. In Rattus norvegicus (Rat), this protein is Fructose-1,6-bisphosphatase isozyme 2 (Fbp2).